Consider the following 614-residue polypeptide: UDP-sugar pyrophosphorylase (614 aa).

Position 2 is an N-acetylalanine (Ala-2).

The protein belongs to the USP family. Requires Mg(2+) as cofactor. The cofactor is Mn(2+). In terms of tissue distribution, ubiquitous, but most abundant in rosette leaves, inflorescences, stems, stamens and pollen.

It catalyses the reaction a monosaccharide 1-phosphate + UTP + H(+) = a UDP-monosaccharide + diphosphate. Required for the synthesis of the intine, the pectocellulosic inner wall of developing pollen. May function as the terminal enzyme of the myo-inositol oxidation (MIO) pathway. May also play a role in the salvage pathway for synthesis of nucleotide sugars. Can use a wide range of substrates including glucose-1-phosphate, galactose-1-phosphate, xylose-1-phosphate, arabinose-1-phosphate and glucuronate-1-phosphate. The protein is UDP-sugar pyrophosphorylase (USP) of Arabidopsis thaliana (Mouse-ear cress).